The chain runs to 501 residues: MPDAVGAIDQGTTSTRFIVFDRRGTILAQAQREHEQIFPRPGWVEHDPREIWRNTHAVMREGLARAGLAPEDLAAIGITNQRETAVLWDRRTGEPLHDAIVWQDTRTDRSVAALARDGGRDRFRAVTGLPLASYFSASKLAWLLDHVEGARAKAEDGTALFGTIDSWLVWNLTGGPDGGLHVTDVTNASRTQLMSLATLDWDEAMLGVFRIPRAVLPTIVSSSAVLGEARDPFPGVPLGGILGDQQAALFGQTCFSAGEAKNTYGTGCFALMNTGPAPVASSAGLITTVAYRLDGRPPAYALEGSIAITGALVQWLRDNLGLIGASSEIEGLARSVEDNGGVYVVPAFSGLYAPHWRDDARGLIIGLTRYANRGHIARACLEATAYQTREVLEAMERDSGCPIAELRCDGGMTVNDLLMQFQADILDRPTLRPKVSETTALGAAYAAGLATGFWKTLEDLRDNWAVDKRWHPHIQAEERRALFAGWSRAVERSFGWVEENA.

Residue threonine 12 coordinates ADP. Residues threonine 12, threonine 13, and serine 14 each coordinate ATP. A sn-glycerol 3-phosphate-binding site is contributed by threonine 12. ADP is bound at residue arginine 16. Sn-glycerol 3-phosphate-binding residues include arginine 82, glutamate 83, tyrosine 134, and aspartate 244. Glycerol contacts are provided by arginine 82, glutamate 83, tyrosine 134, aspartate 244, and glutamine 245. Residues threonine 266 and glycine 310 each contribute to the ADP site. The ATP site is built by threonine 266, glycine 310, glutamine 314, and glycine 411. Residues glycine 411 and asparagine 415 each coordinate ADP.

It belongs to the FGGY kinase family.

The enzyme catalyses glycerol + ATP = sn-glycerol 3-phosphate + ADP + H(+). Its pathway is polyol metabolism; glycerol degradation via glycerol kinase pathway; sn-glycerol 3-phosphate from glycerol: step 1/1. Inhibited by fructose 1,6-bisphosphate (FBP). In terms of biological role, key enzyme in the regulation of glycerol uptake and metabolism. Catalyzes the phosphorylation of glycerol to yield sn-glycerol 3-phosphate. This chain is Glycerol kinase, found in Methylorubrum extorquens (strain PA1) (Methylobacterium extorquens).